A 274-amino-acid chain; its full sequence is SPbeta prophage-derived UPF0714 protein YoqZ (274 aa).

The protein belongs to the UPF0714 family.

In Bacillus subtilis (strain 168), this protein is SPbeta prophage-derived UPF0714 protein YoqZ (yoqZ).